The following is a 344-amino-acid chain: Homoserine O-acetyltransferase (344 aa).

Cys-142 functions as the Acyl-thioester intermediate in the catalytic mechanism. Substrate-binding residues include Lys-163 and Ser-192. Residue His-235 is the Proton acceptor of the active site. Glu-237 is a catalytic residue. A substrate-binding site is contributed by Arg-249.

Belongs to the MetA family.

It is found in the cytoplasm. It catalyses the reaction L-homoserine + acetyl-CoA = O-acetyl-L-homoserine + CoA. It participates in amino-acid biosynthesis; L-methionine biosynthesis via de novo pathway; O-acetyl-L-homoserine from L-homoserine: step 1/1. Functionally, transfers an acetyl group from acetyl-CoA to L-homoserine, forming acetyl-L-homoserine. This is Homoserine O-acetyltransferase from Bifidobacterium adolescentis (strain ATCC 15703 / DSM 20083 / NCTC 11814 / E194a).